A 133-amino-acid polypeptide reads, in one-letter code: Profilin Sal k 4.0101 (133 aa).

Cys-95 and Cys-117 are joined by a disulfide.

It belongs to the profilin family. Occurs in many kinds of cells as a complex with monomeric actin in a 1:1 ratio. As to expression, expressed in pollen.

The protein localises to the cytoplasm. Its subcellular location is the cytoskeleton. Its function is as follows. Binds to actin and affects the structure of the cytoskeleton. At high concentrations, profilin prevents the polymerization of actin, whereas it enhances it at low concentrations. This Kali turgidum (Prickly saltwort) protein is Profilin Sal k 4.0101.